The following is a 428-amino-acid chain: Enolase (428 aa).

Residue Gln164 participates in (2R)-2-phosphoglycerate binding. Glu206 serves as the catalytic Proton donor. Asp243, Glu286, and Asp313 together coordinate Mg(2+). Residues Lys338, Arg367, Ser368, and Lys389 each contribute to the (2R)-2-phosphoglycerate site. The active-site Proton acceptor is Lys338.

The protein belongs to the enolase family. Mg(2+) is required as a cofactor.

It localises to the cytoplasm. Its subcellular location is the secreted. The protein resides in the cell surface. It carries out the reaction (2R)-2-phosphoglycerate = phosphoenolpyruvate + H2O. Its pathway is carbohydrate degradation; glycolysis; pyruvate from D-glyceraldehyde 3-phosphate: step 4/5. Functionally, catalyzes the reversible conversion of 2-phosphoglycerate (2-PG) into phosphoenolpyruvate (PEP). It is essential for the degradation of carbohydrates via glycolysis. The polypeptide is Enolase (Dehalococcoides mccartyi (strain ATCC BAA-2266 / KCTC 15142 / 195) (Dehalococcoides ethenogenes (strain 195))).